The following is a 575-amino-acid chain: Jasmonoyl--L-amino acid synthetase JAR1 (575 aa).

Residues 10–30 (MNRVIDEFDEMTRNAHQVQKQ) adopt a coiled-coil conformation. S98 contacts ATP. S101 contacts jasmonate. ATP contacts are provided by residues M118, T121, G163, N168, and 331–336 (GSSEGW). 166 to 170 (TTNVY) lines the an L-alpha-amino acid pocket. 328-331 (HDYG) contributes to the jasmonate binding site. 530 to 534 (KIQEH) contributes to the an L-alpha-amino acid binding site. K557 lines the ATP pocket.

It belongs to the IAA-amido conjugating enzyme family. As to quaternary structure, interacts with GSTU20/FIP1 under continuous far red (cFR) light; this binding increases its activity and determines the priority of substrate binding.

It is found in the cytoplasm. The enzyme catalyses a jasmonate + an L-alpha-amino acid + ATP = a jasmonyl-L-amino acid + AMP + diphosphate + H(+). It carries out the reaction (+)-7-isojasmonate + L-isoleucine + ATP = L-isoleucine-(+)-7-isojasmonate + AMP + diphosphate + H(+). Its activity is regulated as follows. Activated by GSTU20/FIP1. In terms of biological role, catalyzes the synthesis of jasmonates-amino acid conjugates by adenylation; can use Ile and, in vitro at least, Val, Leu and Phe as conjugating amino acids on jasmonic acid (JA) and 9,10-dihydro-JA substrates, and to a lower extent, on 3-oxo-2-(2Z-pentenyl)-cyclopentane-1-butyric acid (OPC-4) and 12-hydroxy-JA (12-OH-JA). Can synthesize adenosine 5-tetraphosphate in vitro. Required for the JA-mediated signaling pathway that regulates many developmental and defense mechanisms, including growth root inhibition, vegetative storage proteins (VSPs) accumulation, induced systemic resistance (ISR), response to wounding and herbivores, tolerance to ozone O(3) (probably having a role in lesion containment). Plays an important role in the accumulation of JA-Ile in response to wounding, both locally and systemically; promotes JA responding genes especially in distal part of wounded plants, via the JA-Ile-stimulated degradation of JAZ repressor proteins by the SCF(COI)E3 ubiquitin-protein ligase pathway. Involved in the apoptosis-like programmed cell death (PCD) induced by fungal toxin fumonisin B1-mediated (FB1). Required for volatile compounds (C6-aldehydes and allo-ocimene)-mediated defense activation. Involved in the non-pathogenic rhizobacterium-mediated ISR (defense priming) by P.fluorescens (strains CHAOr and WCS417r) and P.putida LSW17S against infection leaf pathogens such as P.syringae pv. tomato and H.parasitica. Required for the JA-dependent resistance to fungi such as P.irregulare, U.vignae and U.appendiculatus. Necessary to induce systemic resistance against R.solanaceraum and P.syringae pv. tomato with P.oligandrum (a non-pathogenic biocontrol agent) cell wall protein fraction (CWP). Mediates PGIP2 accumulation in response to B.cinerea infection and thus contributes to resistance against this pathogen. Modulates the UV-B alteration of leaves attractiveness to diamondback moths P.xylostella leading to insect oviposition. Involved in the regulation of far-red light influence on development, being an actor of the interplay between light and JA signaling. Seems necessary for the salicylic acid (SA)-mediated, NPR1-independent resistance pathway. May contribute to the chitin-elicited pathway. Contributes to the sensitivity toward F.graminearum. The protein is Jasmonoyl--L-amino acid synthetase JAR1 of Arabidopsis thaliana (Mouse-ear cress).